The following is a 377-amino-acid chain: Lipoyl synthase, mitochondrial (377 aa).

[4Fe-4S] cluster contacts are provided by cysteine 103, cysteine 108, cysteine 114, cysteine 134, cysteine 138, cysteine 141, and serine 349. Positions glutamate 119–leucine 338 constitute a Radical SAM core domain.

The protein belongs to the radical SAM superfamily. Lipoyl synthase family. It depends on [4Fe-4S] cluster as a cofactor.

The protein localises to the mitochondrion. The catalysed reaction is [[Fe-S] cluster scaffold protein carrying a second [4Fe-4S](2+) cluster] + N(6)-octanoyl-L-lysyl-[protein] + 2 oxidized [2Fe-2S]-[ferredoxin] + 2 S-adenosyl-L-methionine + 4 H(+) = [[Fe-S] cluster scaffold protein] + N(6)-[(R)-dihydrolipoyl]-L-lysyl-[protein] + 4 Fe(3+) + 2 hydrogen sulfide + 2 5'-deoxyadenosine + 2 L-methionine + 2 reduced [2Fe-2S]-[ferredoxin]. It participates in protein modification; protein lipoylation via endogenous pathway; protein N(6)-(lipoyl)lysine from octanoyl-[acyl-carrier-protein]: step 2/2. Functionally, catalyzes the radical-mediated insertion of two sulfur atoms into the C-6 and C-8 positions of the octanoyl moiety bound to the lipoyl domains of lipoate-dependent enzymes, thereby converting the octanoylated domains into lipoylated derivatives. This Drosophila sechellia (Fruit fly) protein is Lipoyl synthase, mitochondrial.